The following is a 41-amino-acid chain: Photosystem II reaction center protein L (41 aa).

A helical transmembrane segment spans residues L20–T40.

It belongs to the PsbL family. In terms of assembly, PSII is composed of 1 copy each of membrane proteins PsbA, PsbB, PsbC, PsbD, PsbE, PsbF, PsbH, PsbI, PsbJ, PsbK, PsbL, PsbM, PsbT, PsbX, PsbY, PsbZ, Psb30/Ycf12, peripheral proteins PsbO, CyanoQ (PsbQ), PsbU, PsbV and a large number of cofactors. It forms dimeric complexes.

It is found in the cellular thylakoid membrane. In terms of biological role, one of the components of the core complex of photosystem II (PSII). PSII is a light-driven water:plastoquinone oxidoreductase that uses light energy to abstract electrons from H(2)O, generating O(2) and a proton gradient subsequently used for ATP formation. It consists of a core antenna complex that captures photons, and an electron transfer chain that converts photonic excitation into a charge separation. This subunit is found at the monomer-monomer interface and is required for correct PSII assembly and/or dimerization. In Synechococcus sp. (strain ATCC 27144 / PCC 6301 / SAUG 1402/1) (Anacystis nidulans), this protein is Photosystem II reaction center protein L.